A 603-amino-acid polypeptide reads, in one-letter code: MALQMIAPFLSSFLPNPRHSLAAHGLTHQKCVSKHISCSTTTPTYSTTVPRRSGNYKPSIWDYDFVQSLGSGYKVEAHGTRVKKLKEVVKHLLKETDSSLAQIELIDKLRRLGLRWLFKNEIKQVLYTISSDNTSIEMRKDLHAVSTRFRLLRQHGYKVSTDVFNDFKDEKGCFKPSLSMDIKGMLSLYEASHLAFQGETVLDEARAFVSTHLMDIKENIDPILHKKVEHALDMPLHWRLEKLEARWYMDIYMREEGMNSSLLELAMLHFNIVQTTFQTNLKSLSRWWKDLGLGEQLSFTRDRLVECFFWAAAMTPEPQFGRCQEVVAKVAQLIIIIDDIYDVYGTVDELELFTNAIDRWDLEAMEQLPEYMKTCFLALYNSINEIGYDILKEEGRNVIPYLRNTWTELCKAFLVEAKWYSSGYTPTLEEYLQTSWISIGSLPMQTYVFALLGKNLAPESSDFAEKISDILRLGGMMIRLPDDLGTSTDELKRGDVPKSIQCYMHEAGVTEDVARDHIMGLFQETWKKLNEYLVESSLPHAFIDHAMNLGRVSYCTYKHGDGFSDGFGDPGSQEKKMFMSLFAEPLQVDEAKGISFYVDGGSA.

A chloroplast-targeting transit peptide spans 1 to 50 (MALQMIAPFLSSFLPNPRHSLAAHGLTHQKCVSKHISCSTTTPTYSTTVP). Residues Arg-301, Asp-338, Asp-342, Arg-479, and Asp-482 each coordinate (2E)-geranyl diphosphate. The Mg(2+) site is built by Asp-338 and Asp-342. The DDXXD motif signature appears at 338–342 (DDIYD). Positions 482, 486, and 490 each coordinate Mg(2+).

Belongs to the terpene synthase family. Tpsb subfamily. In terms of assembly, homodimer. Mg(2+) serves as cofactor. Requires Mn(2+) as cofactor. As to expression, expressed in the oil cells of the leaves.

It localises to the plastid. Its subcellular location is the chloroplast. The enzyme catalyses (2E)-geranyl diphosphate + H2O = (2E)-geraniol + diphosphate. Its pathway is secondary metabolite biosynthesis; terpenoid biosynthesis. Functionally, monoterpene synthase that catalyzes the formation of geraniol from geranyl diphosphate. The protein is Geraniol synthase, chloroplastic (GerS) of Cinnamomum tenuipile (Alseodaphne mollis).